We begin with the raw amino-acid sequence, 199 residues long: MKSGLWYFFLFCLRIKVLTGEINGSANYEMFIFHNGGVQILCKYPDIVQQFKMQLLKGGQILCDLTKTKGSGNTVSIKSLKFCHSQLSNNSVSFFLYNLDHSHANYYFCNLSIFDPPPFKVTLTGGYLHIYESQLCCQLKFWLPIGCAAFVVVCILGCILICWLTKKKYSSSVHDPNGEYMFMRAVNTAKKSRLTDVTL.

The signal sequence occupies residues 1–20 (MKSGLWYFFLFCLRIKVLTG). At 21-140 (EINGSANYEM…YESQLCCQLK (120 aa)) the chain is on the extracellular side. Residues 30-132 (MFIFHNGGVQ…LTGGYLHIYE (103 aa)) form the Ig-like V-type domain. Disulfide bonds link C42-C109 and C63-C83. N89 and N110 each carry an N-linked (GlcNAc...) asparagine glycan. The helical transmembrane segment at 141 to 161 (FWLPIGCAAFVVVCILGCILI) threads the bilayer. Residues 162–199 (CWLTKKKYSSSVHDPNGEYMFMRAVNTAKKSRLTDVTL) lie on the Cytoplasmic side of the membrane.

In terms of assembly, homodimer; disulfide-linked. Interacts with ICOSLG. Interacts with PIK3R1. Interacts with TBK1; this interaction is critical for the maturation of T follicular regulatory cells. N-glycosylated. Activated T-cells. Highly expressed on tonsillar T-cells, which are closely associated with B-cells in the apical light zone of germinal centers, the site of terminal B-cell maturation. Expressed at lower levels in thymus, lung, lymph node and peripheral blood leukocytes. Expressed in the medulla of fetal and newborn thymus.

The protein localises to the cell membrane. Its subcellular location is the secreted. In terms of biological role, stimulatory receptor expressed in activated or antigen-experienced T-cells that plays an important role in the immune response. Upon binding to its ligand ICOSL expressed on antigen presenting cells (APCs), delivers costimulatory signals that enhances all basic T-cell responses to a foreign antigen, namely proliferation, secretion of lymphokines including IL10, up-regulation of molecules that mediate cell-cell interaction, and effective help for antibody secretion by B-cells. Also acts as a costimulatory receptor critical for the differentiation of T follicular regulatory cells upon immune challenges such as viral infection. Mechanistically, potentiates TCR-induced calcium flux by augmenting PLCG1 activation and actin remodeling. In addition, activates PI3K signaling pathways independently of calcium flux. Essential both for efficient interaction between T and B-cells and for normal antibody responses to T-cell dependent antigens. Prevents the apoptosis of pre-activated T-cells. Plays a critical role in CD40-mediated class switching of immunoglobin isotypes. This chain is Inducible T-cell costimulator (ICOS), found in Homo sapiens (Human).